The chain runs to 541 residues: Chaperonin GroEL (541 aa).

ATP-binding positions include 29 to 32, 86 to 90, Gly413, 476 to 478, and Asp492; these read TLGP, DGTTT, and NAA.

The protein belongs to the chaperonin (HSP60) family. Forms a cylinder of 14 subunits composed of two heptameric rings stacked back-to-back. Interacts with the co-chaperonin GroES.

The protein localises to the cytoplasm. The catalysed reaction is ATP + H2O + a folded polypeptide = ADP + phosphate + an unfolded polypeptide.. Functionally, together with its co-chaperonin GroES, plays an essential role in assisting protein folding. The GroEL-GroES system forms a nano-cage that allows encapsulation of the non-native substrate proteins and provides a physical environment optimized to promote and accelerate protein folding. In Streptococcus equi subsp. zooepidemicus (strain MGCS10565), this protein is Chaperonin GroEL.